Consider the following 359-residue polypeptide: Endosome-associated-trafficking regulator 1 (359 aa).

2 positions are modified to phosphoserine: S18 and S74. Residues 100 to 125 (LLDEDEDEEDGWNGAYLPSAMEQTHS) form a required for interaction with PTPN13 region. The interval 153–180 (SLPPWTLSDSDSRISPTGSPSADFTAHG) is disordered. Over residues 159–174 (LSDSDSRISPTGSPSA) the composition is skewed to polar residues. S167 and S171 each carry phosphoserine. Positions 185-295 (DRHLRTLQIS…FKRENEALRS (111 aa)) form a coiled coil.

This sequence belongs to the ENTR1 family. As to quaternary structure, found in a complex with ENTR1, PTPN13 and GIT1. Interacts with PTPN13 (via the FERM domain). Interacts (via N-terminus) with GIT1 (via N- and C-terminus); this interaction is direct. Interacts with NOD2. Interacts (via N-terminus) with IFT88. Interacts with VPS35. In terms of processing, phosphorylated.

The protein localises to the cytoplasm. The protein resides in the early endosome. It is found in the endosome. Its subcellular location is the recycling endosome. It localises to the midbody. The protein localises to the cytoskeleton. The protein resides in the microtubule organizing center. It is found in the centrosome. Its subcellular location is the cilium basal body. Its function is as follows. Endosome-associated protein that plays a role in membrane receptor sorting, cytokinesis and ciliogenesis. Involved in the endosome-to-plasma membrane trafficking and recycling of SNX27-retromer-dependent cargo proteins, such as GLUT1. Involved in the regulation of cytokinesis; the function may involve PTPN13 and GIT1. Plays a role in the formation of cilia. Involved in cargo protein localization, such as PKD2, at primary cilia. Involved in the presentation of the tumor necrosis factor (TNF) receptor TNFRSF1A on the cell surface, and hence in the modulation of the TNF-induced apoptosis. The protein is Endosome-associated-trafficking regulator 1 of Bos taurus (Bovine).